An 88-amino-acid polypeptide reads, in one-letter code: Small ribosomal subunit protein bS20 (88 aa).

The protein belongs to the bacterial ribosomal protein bS20 family.

Binds directly to 16S ribosomal RNA. The polypeptide is Small ribosomal subunit protein bS20 (Clostridium acetobutylicum (strain ATCC 824 / DSM 792 / JCM 1419 / IAM 19013 / LMG 5710 / NBRC 13948 / NRRL B-527 / VKM B-1787 / 2291 / W)).